Here is a 149-residue protein sequence, read N- to C-terminus: Endoribonuclease YbeY (149 aa).

Residues His-113, His-117, and His-123 each coordinate Zn(2+).

The protein belongs to the endoribonuclease YbeY family. It depends on Zn(2+) as a cofactor.

The protein localises to the cytoplasm. Single strand-specific metallo-endoribonuclease involved in late-stage 70S ribosome quality control and in maturation of the 3' terminus of the 16S rRNA. The protein is Endoribonuclease YbeY of Saccharophagus degradans (strain 2-40 / ATCC 43961 / DSM 17024).